The sequence spans 219 residues: Thiamine-phosphate synthase (219 aa).

4-amino-2-methyl-5-(diphosphooxymethyl)pyrimidine contacts are provided by residues 44–48 (QFREK) and asparagine 79. Aspartate 80 and aspartate 99 together coordinate Mg(2+). Serine 117 provides a ligand contact to 4-amino-2-methyl-5-(diphosphooxymethyl)pyrimidine. Position 143–145 (143–145 (TST)) interacts with 2-[(2R,5Z)-2-carboxy-4-methylthiazol-5(2H)-ylidene]ethyl phosphate. Lysine 146 provides a ligand contact to 4-amino-2-methyl-5-(diphosphooxymethyl)pyrimidine. Residues glycine 175 and 195-196 (IS) contribute to the 2-[(2R,5Z)-2-carboxy-4-methylthiazol-5(2H)-ylidene]ethyl phosphate site.

Belongs to the thiamine-phosphate synthase family. Mg(2+) serves as cofactor.

It catalyses the reaction 2-[(2R,5Z)-2-carboxy-4-methylthiazol-5(2H)-ylidene]ethyl phosphate + 4-amino-2-methyl-5-(diphosphooxymethyl)pyrimidine + 2 H(+) = thiamine phosphate + CO2 + diphosphate. The catalysed reaction is 2-(2-carboxy-4-methylthiazol-5-yl)ethyl phosphate + 4-amino-2-methyl-5-(diphosphooxymethyl)pyrimidine + 2 H(+) = thiamine phosphate + CO2 + diphosphate. It carries out the reaction 4-methyl-5-(2-phosphooxyethyl)-thiazole + 4-amino-2-methyl-5-(diphosphooxymethyl)pyrimidine + H(+) = thiamine phosphate + diphosphate. Its pathway is cofactor biosynthesis; thiamine diphosphate biosynthesis; thiamine phosphate from 4-amino-2-methyl-5-diphosphomethylpyrimidine and 4-methyl-5-(2-phosphoethyl)-thiazole: step 1/1. Condenses 4-methyl-5-(beta-hydroxyethyl)thiazole monophosphate (THZ-P) and 2-methyl-4-amino-5-hydroxymethyl pyrimidine pyrophosphate (HMP-PP) to form thiamine monophosphate (TMP). This chain is Thiamine-phosphate synthase, found in Bacillus thuringiensis subsp. konkukian (strain 97-27).